A 418-amino-acid chain; its full sequence is Probable basic-leucine zipper transcription factor E (418 aa).

Positions 8–47 (IQQIQQLHMLLQQQQQQQQQQQQQQQQQQQQLQQQNFQLT) form a coiled coil. Low complexity-rich tracts occupy residues 51–71 (FQIPVNNNNNNNNNSNNNNNN) and 95–134 (INTTTTTTNNNNNNNNNNNNNNNNNNNNNNNNNNNNNNNT). 4 disordered regions span residues 51–75 (FQIPVNNNNNNNNNSNNNNNNETAF), 95–149 (INTT…KKQK), 165–196 (PTAAVKKKPPAKKSAKNAASQPTSPTLSTTNT), and 211–252 (KNQE…KNRR). Residues 169–179 (VKKKPPAKKSA) are compositionally biased toward basic residues. Positions 180 to 196 (KNAASQPTSPTLSTTNT) are enriched in low complexity. Residues 220 to 239 (DNSEESDSDEEDFENGDNEN) are compositionally biased toward acidic residues. Residues 246-309 (GDRKNRRLLK…QLMKDKVRYL (64 aa)) form the bZIP domain. The segment at 248–268 (RKNRRLLKNREAAQLFRQRQK) is basic motif. The leucine-zipper stretch occupies residues 274–281 (LESKASSL). Positions 324-362 (SVVNQDNINNLNNNLNGLQNQQNNNNNNNNNNNNNNNNN) form a coiled coil. The tract at residues 336 to 418 (NNLNGLQNQQ…DSLLFNLPPD (83 aa)) is disordered.

The protein belongs to the bZIP family.

The protein resides in the nucleus. Its function is as follows. Probable transcriptional regulator. This is Probable basic-leucine zipper transcription factor E (bzpE) from Dictyostelium discoideum (Social amoeba).